A 268-amino-acid chain; its full sequence is Tryptophan synthase alpha chain (268 aa).

Residues Glu-49 and Asp-60 each act as proton acceptor in the active site.

Belongs to the TrpA family. Tetramer of two alpha and two beta chains.

The enzyme catalyses (1S,2R)-1-C-(indol-3-yl)glycerol 3-phosphate + L-serine = D-glyceraldehyde 3-phosphate + L-tryptophan + H2O. Its pathway is amino-acid biosynthesis; L-tryptophan biosynthesis; L-tryptophan from chorismate: step 5/5. The alpha subunit is responsible for the aldol cleavage of indoleglycerol phosphate to indole and glyceraldehyde 3-phosphate. The protein is Tryptophan synthase alpha chain of Escherichia coli O6:H1 (strain CFT073 / ATCC 700928 / UPEC).